A 219-amino-acid polypeptide reads, in one-letter code: MIFYIISLKIKLIRDYYKYNACIYNNNMEQIIQNVNTIINLYEQFGGSDYIGESQTQLEHMTRAAMLAEEFGEQNDIILAAFLHDIGHLIEINNDTIKMGSLGIMNHELIARDYLIEKGFDKDIANIIGNHVKAKRYLVTKYPEYKINLSEASRQTLLYQKNTMSQEEMTEFESDPLFNKSLKLRFYDDQSKLLSKSIKPLDYYRNLMIEYLSESTNNV.

Positions 57–158 constitute an HD domain; sequence QLEHMTRAAM…LSEASRQTLL (102 aa).

This is an uncharacterized protein from Acanthamoeba polyphaga mimivirus (APMV).